Reading from the N-terminus, the 118-residue chain is Aspartate 1-decarboxylase 1 (118 aa).

Residue Ser25 is the Schiff-base intermediate with substrate; via pyruvic acid of the active site. Ser25 is subject to Pyruvic acid (Ser). Thr57 serves as a coordination point for substrate. Residue Tyr58 is the Proton donor of the active site. 73–75 provides a ligand contact to substrate; it reads GAA.

Belongs to the PanD family. As to quaternary structure, heterooctamer of four alpha and four beta subunits. Pyruvate is required as a cofactor. In terms of processing, is synthesized initially as an inactive proenzyme, which is activated by self-cleavage at a specific serine bond to produce a beta-subunit with a hydroxyl group at its C-terminus and an alpha-subunit with a pyruvoyl group at its N-terminus.

Its subcellular location is the cytoplasm. The enzyme catalyses L-aspartate + H(+) = beta-alanine + CO2. Its pathway is cofactor biosynthesis; (R)-pantothenate biosynthesis; beta-alanine from L-aspartate: step 1/1. Functionally, catalyzes the pyruvoyl-dependent decarboxylation of aspartate to produce beta-alanine. The protein is Aspartate 1-decarboxylase 1 of Gloeobacter violaceus (strain ATCC 29082 / PCC 7421).